Reading from the N-terminus, the 156-residue chain is ATP synthase subunit b (156 aa).

Residues 7 to 27 (LFVQAIVFLILVLFTMKFVWP) traverse the membrane as a helical segment.

It belongs to the ATPase B chain family. As to quaternary structure, F-type ATPases have 2 components, F(1) - the catalytic core - and F(0) - the membrane proton channel. F(1) has five subunits: alpha(3), beta(3), gamma(1), delta(1), epsilon(1). F(0) has three main subunits: a(1), b(2) and c(10-14). The alpha and beta chains form an alternating ring which encloses part of the gamma chain. F(1) is attached to F(0) by a central stalk formed by the gamma and epsilon chains, while a peripheral stalk is formed by the delta and b chains.

It is found in the cell inner membrane. F(1)F(0) ATP synthase produces ATP from ADP in the presence of a proton or sodium gradient. F-type ATPases consist of two structural domains, F(1) containing the extramembraneous catalytic core and F(0) containing the membrane proton channel, linked together by a central stalk and a peripheral stalk. During catalysis, ATP synthesis in the catalytic domain of F(1) is coupled via a rotary mechanism of the central stalk subunits to proton translocation. Its function is as follows. Component of the F(0) channel, it forms part of the peripheral stalk, linking F(1) to F(0). This Delftia acidovorans (strain DSM 14801 / SPH-1) protein is ATP synthase subunit b.